The following is a 287-amino-acid chain: Centromere protein P (287 aa).

Residues 1–37 are a coiled coil; the sequence is MDNSVYQVYEDEIQLLEEEIKLLSDKYEDIQQESTFF.

It belongs to the CENP-P/CTF19 family. As to quaternary structure, component of the CENPA-HI complex, at least composed of CENPH, CENPI, CENPK, CENPL, CENPM, CENPO and CENPP.

The protein resides in the nucleus. Its subcellular location is the chromosome. The protein localises to the centromere. Its function is as follows. Component of the CENPA-HI complex, a centromeric complex involved in assembly of kinetochore proteins, mitotic progression and chromosome segregation. This Gallus gallus (Chicken) protein is Centromere protein P (CENPP).